A 144-amino-acid polypeptide reads, in one-letter code: Large ribosomal subunit protein uL15 (144 aa).

A disordered region spans residues 1–44 (MNLNELQPAAGSRKLRNRVGRGTSSGNGKTSGRGQKGQKARGKV). The segment covering 23 to 35 (TSSGNGKTSGRGQ) has biased composition (gly residues).

It belongs to the universal ribosomal protein uL15 family. As to quaternary structure, part of the 50S ribosomal subunit.

Binds to the 23S rRNA. This Leuconostoc citreum (strain KM20) protein is Large ribosomal subunit protein uL15.